A 91-amino-acid polypeptide reads, in one-letter code: Small ribosomal subunit protein bS16 (91 aa).

It belongs to the bacterial ribosomal protein bS16 family.

This is Small ribosomal subunit protein bS16 from Ligilactobacillus salivarius (strain UCC118) (Lactobacillus salivarius).